An 855-amino-acid chain; its full sequence is Pre-mRNA-splicing factor SYF1 (855 aa).

HAT repeat units follow at residues L15–G47, A48–A80, P90–D122, G124–S158, P160–R192, Q198–Q230, V235–R268, G270–S305, and G369–D407. K420 carries the post-translational modification N6-acetyllysine. HAT repeat units lie at residues G498–E530, K532–S566, R571–E605, Y643–K677, and G679–R713. Residues A808–D855 are disordered. Residues Q820–P834 show a composition bias toward acidic residues. S851 carries the phosphoserine modification.

The protein belongs to the crooked-neck family. Associates with RNA polymerase II, the TCR-specific proteins CKN1/CSA and ERCC6/CSB, and XPA. Identified in the spliceosome C complex. Component of the XAB2 complex, a multimeric protein complex composed of XAB2, PRPF19, AQR, ZNF830, ISY1, and PPIE. Identified in a pentameric intron-binding (IB) complex composed of AQR, XAB2, ISY1, ZNF830 and PPIE that is incorporated into the spliceosome as a preassembled complex. The IB complex does not contain PRPF19.

It is found in the nucleus. Its function is as follows. Involved in pre-mRNA splicing as component of the spliceosome. Involved in transcription-coupled repair (TCR), transcription and pre-mRNA splicing. This is Pre-mRNA-splicing factor SYF1 (Xab2) from Mus musculus (Mouse).